The chain runs to 734 residues: DNA replication licensing factor MCM5 (734 aa).

The residue at position 2 (serine 2) is an N-acetylserine. The MCM domain maps to 331-537 (IYELISKSIA…RDVMLAKHVI (207 aa)). Residue arginine 371 participates in ADP binding. Residues lysine 392 and lysine 396 each carry the N6-acetyllysine modification. An Arginine finger motif is present at residues 512–515 (SRFD). Serine 605 carries the post-translational modification Phosphoserine.

Belongs to the MCM family. Component of the MCM2-7 complex. The complex forms a toroidal hexameric ring with the proposed subunit order MCM2-MCM6-MCM4-MCM7-MCM3-MCM5. Component of the CMG helicase complex, a hexameric ring of related MCM2-7 subunits stabilized by CDC45 and the tetrameric GINS complex. Interacts with ANKRD17. Interacts with MCMBP. Interacts with TONSL; the interaction is direct.

The protein resides in the nucleus. It localises to the chromosome. The protein localises to the cytoplasm. It is found in the cytosol. The enzyme catalyses ATP + H2O = ADP + phosphate + H(+). In terms of biological role, acts as a component of the MCM2-7 complex (MCM complex) which is the replicative helicase essential for 'once per cell cycle' DNA replication initiation and elongation in eukaryotic cells. Core component of CDC45-MCM-GINS (CMG) helicase, the molecular machine that unwinds template DNA during replication, and around which the replisome is built. The active ATPase sites in the MCM2-7 ring are formed through the interaction surfaces of two neighboring subunits such that a critical structure of a conserved arginine finger motif is provided in trans relative to the ATP-binding site of the Walker A box of the adjacent subunit. The six ATPase active sites, however, are likely to contribute differentially to the complex helicase activity. This is DNA replication licensing factor MCM5 from Bos taurus (Bovine).